The primary structure comprises 154 residues: Glycosylation-dependent cell adhesion molecule 1 (154 aa).

The first 18 residues, 1–18 (MKFLCILLLASLAATSLA), serve as a signal peptide directing secretion. Thr-34 carries O-linked (GalNAc...) threonine; partial glycosylation. Residues Ser-48, Ser-53, Ser-57, Ser-59, and Ser-65 each carry the phosphoserine modification. The span at 51–65 (DLSKEPSISREDLIS) shows a compositional bias: basic and acidic residues. A disordered region spans residues 51–115 (DLSKEPSISR…EHAPSDASTT (65 aa)). N-linked (GlcNAc...) asparagine glycosylation is present at Asn-96.

It belongs to the PP3/GlyCAM-1 family. As to expression, highly and specifically expressed in the lactating mammary gland.

The protein localises to the membrane. In Capra hircus (Goat), this protein is Glycosylation-dependent cell adhesion molecule 1 (GLYCAM1).